An 80-amino-acid chain; its full sequence is Putative ATP-dependent Clp protease proteolytic subunit (80 aa).

His19 is a catalytic residue.

This sequence belongs to the peptidase S14 family. As to quaternary structure, component of the chloroplastic Clp protease core complex.

It localises to the plastid. The protein localises to the chloroplast. The catalysed reaction is Hydrolysis of proteins to small peptides in the presence of ATP and magnesium. alpha-casein is the usual test substrate. In the absence of ATP, only oligopeptides shorter than five residues are hydrolyzed (such as succinyl-Leu-Tyr-|-NHMec, and Leu-Tyr-Leu-|-Tyr-Trp, in which cleavage of the -Tyr-|-Leu- and -Tyr-|-Trp bonds also occurs).. In terms of biological role, cleaves peptides in various proteins in a process that requires ATP hydrolysis. Has a chymotrypsin-like activity. Plays a major role in the degradation of misfolded proteins. In Pinus strobus (Eastern white pine), this protein is Putative ATP-dependent Clp protease proteolytic subunit.